Consider the following 564-residue polypeptide: Septation ring formation regulator EzrA (564 aa).

The Extracellular portion of the chain corresponds to 1 to 2 (ME). A helical transmembrane segment spans residues 3-21 (FVIGLLALFLILFATGYLF). Over 22-564 (RKNIYKEIDR…RLEADAKQPE (543 aa)) the chain is Cytoplasmic. Coiled-coil stretches lie at residues 99–159 (QKSK…AYSH), 243–281 (KGYKLDHIQVEKELENLLKELKRAEDALLDELDLEEAAA), and 310–498 (KVPE…VELV).

The protein belongs to the EzrA family.

The protein resides in the cell membrane. Functionally, negative regulator of FtsZ ring formation; modulates the frequency and position of FtsZ ring formation. Inhibits FtsZ ring formation at polar sites. Interacts either with FtsZ or with one of its binding partners to promote depolymerization. This Bacillus licheniformis (strain ATCC 14580 / DSM 13 / JCM 2505 / CCUG 7422 / NBRC 12200 / NCIMB 9375 / NCTC 10341 / NRRL NRS-1264 / Gibson 46) protein is Septation ring formation regulator EzrA.